The primary structure comprises 235 residues: UPF0714 protein YmaC (235 aa).

The helical transmembrane segment at 5-24 (LLNVILVLAIVLFLRYVHYS) threads the bilayer.

The protein belongs to the UPF0714 family.

Its subcellular location is the cell membrane. The sequence is that of UPF0714 protein YmaC (ymaC) from Bacillus subtilis (strain 168).